We begin with the raw amino-acid sequence, 249 residues long: ATP synthase subunit a (249 aa).

Helical transmembrane passes span 33–53 (YMLI…AQLV), 83–103 (FFPL…IGII), 113–133 (LIVT…YGVA), 139–159 (FFSI…VMFI), 188–208 (VFAG…WVGG), and 216–236 (VALY…FAIL).

The protein belongs to the ATPase A chain family. As to quaternary structure, F-type ATPases have 2 components, CF(1) - the catalytic core - and CF(0) - the membrane proton channel. CF(1) has five subunits: alpha(3), beta(3), gamma(1), delta(1), epsilon(1). CF(0) has three main subunits: a(1), b(2) and c(9-12). The alpha and beta chains form an alternating ring which encloses part of the gamma chain. CF(1) is attached to CF(0) by a central stalk formed by the gamma and epsilon chains, while a peripheral stalk is formed by the delta and b chains.

It localises to the cell inner membrane. In terms of biological role, key component of the proton channel; it plays a direct role in the translocation of protons across the membrane. The polypeptide is ATP synthase subunit a (Bradyrhizobium diazoefficiens (strain JCM 10833 / BCRC 13528 / IAM 13628 / NBRC 14792 / USDA 110)).